The following is a 189-amino-acid chain: Endoribonuclease YbeY (189 aa).

Residues 1 to 10 (MKERSSSPGT) show a composition bias toward polar residues. The segment at 1 to 23 (MKERSSSPGTPDSGRRARPKPAK) is disordered. Zn(2+)-binding residues include histidine 141, histidine 145, and histidine 151.

The protein belongs to the endoribonuclease YbeY family. Requires Zn(2+) as cofactor.

It is found in the cytoplasm. Functionally, single strand-specific metallo-endoribonuclease involved in late-stage 70S ribosome quality control and in maturation of the 3' terminus of the 16S rRNA. This Nitrosospira multiformis (strain ATCC 25196 / NCIMB 11849 / C 71) protein is Endoribonuclease YbeY.